Consider the following 222-residue polypeptide: Transmembrane protein 54 (222 aa).

4 helical membrane passes run 22–42 (LVLV…HGTV), 62–82 (ILSV…IVLS), 100–120 (ACAL…AMTF), and 155–175 (SSLC…VFAV).

The protein belongs to the TMEM54 family. Ubiquitously expressed in cancer cell lines.

It localises to the membrane. The chain is Transmembrane protein 54 (TMEM54) from Homo sapiens (Human).